A 425-amino-acid polypeptide reads, in one-letter code: Transmembrane protein 184A (425 aa).

Helical transmembrane passes span 51 to 71 (LFLTSALARGVSGVFVWTALL), 96 to 116 (LLFIVPIYAFDSWLSLLLLGG), 133 to 153 (FVIYSFLTLCFQYLGGESAIM), 189 to 209 (TLQFCIVKPVMALITIILQAF), 226 to 246 (VTLVYNASVSLALYALFLFYF), 261 to 281 (FLTIKAIIFLSFWQGMLLAIL), and 303 to 323 (LAAGYQNFLICIEMLFASLAL). Residues 375–425 (QYTQQSTHEAPGPGQGGHPSPSTHPGPASGSGGGKKSRNIEKRMLIPSEDL) form a disordered region. Over residues 392-402 (HPSPSTHPGPA) the composition is skewed to low complexity.

It belongs to the TMEM184 family. In terms of tissue distribution, expressed in vascular cells (at protein level).

Its subcellular location is the cell membrane. The protein resides in the cytoplasm. It is found in the perinuclear region. The protein localises to the early endosome membrane. It localises to the endosome. Its subcellular location is the cytoplasmic vesicle. The protein resides in the secretory vesicle membrane. It is found in the cytoplasmic vesicle membrane. Functionally, acts as a heparin receptor in vascular cells. May be involved in vesicle transport in exocrine cells and Sertoli cells. The protein is Transmembrane protein 184A (Tmem184a) of Rattus norvegicus (Rat).